A 64-amino-acid chain; its full sequence is MAQEQTKRTGGGDEDDTPGADGAAGQERREKLAEDTDDLLDEIDDVLEENAEDFVRAYVQKGGQ.

Residues 1-11 (MAQEQTKRTGG) are compositionally biased toward basic and acidic residues. Residues 1–37 (MAQEQTKRTGGGDEDDTPGADGAAGQERREKLAEDTD) form a disordered region. Residues 21–58 (DGAAGQERREKLAEDTDDLLDEIDDVLEENAEDFVRAY) form an ARC ATPase binding region. Positions 24–52 (AGQERREKLAEDTDDLLDEIDDVLEENAE) form a coiled coil. Q64 carries the post-translational modification Deamidated glutamine. An Isoglutamyl lysine isopeptide (Gln-Lys) (interchain with K-? in acceptor proteins) cross-link involves residue Q64.

It belongs to the prokaryotic ubiquitin-like protein family. Strongly interacts with the proteasome-associated ATPase ARC through a hydrophobic interface; the interacting region of Pup lies in its C-terminal half. There is one Pup binding site per ARC hexamer ring. Is modified by deamidation of its C-terminal glutamine to glutamate by the deamidase Dop, a prerequisite to the subsequent pupylation process.

The protein operates within protein degradation; proteasomal Pup-dependent pathway. Its function is as follows. Protein modifier that is covalently attached to lysine residues of substrate proteins, thereby targeting them for proteasomal degradation. The tagging system is termed pupylation. The protein is Prokaryotic ubiquitin-like protein Pup of Rhodococcus jostii (strain RHA1).